Here is a 157-residue protein sequence, read N- to C-terminus: Protein EOLA1 (157 aa).

The region spanning 6-92 (LSFRQPYAGL…IAGLIDIGET (87 aa)) is the ASCH domain.

Belongs to the EOLA family. In terms of assembly, interacts with MT2A.

May play a role in cell protection during the inflammatory response. In epithelial cells, negatively regulates IL6 production and apoptosis through the regulation of MT2A expression. The sequence is that of Protein EOLA1 from Mus musculus (Mouse).